The following is a 302-amino-acid chain: Large ribosomal subunit protein uL3c (302 aa).

The transit peptide at 1–36 (MFQSSRLVALGLCAALVLVGGSIILSGLSPNLSSPM) directs the protein to the chloroplast. Positions 208-239 (FQGSIRRWGMKRGPMSHGSKSHRQHGSIGCSA) are disordered.

Belongs to the universal ribosomal protein uL3 family. Part of the 50S ribosomal subunit.

Its subcellular location is the plastid. It is found in the chloroplast. In terms of biological role, one of the primary rRNA binding proteins, it binds directly near the 3'-end of the 23S rRNA, where it nucleates assembly of the 50S subunit. This Bigelowiella natans (Pedinomonas minutissima) protein is Large ribosomal subunit protein uL3c (RPL3).